The sequence spans 266 residues: Type III pantothenate kinase (266 aa).

6–13 (DAGNTNIV) is an ATP binding site. Residues tyrosine 100 and 107–110 (GADR) each bind substrate. The Proton acceptor role is filled by aspartate 109. Residue aspartate 129 participates in K(+) binding. Residue threonine 132 coordinates ATP. Threonine 184 serves as a coordination point for substrate.

It belongs to the type III pantothenate kinase family. Homodimer. NH4(+) serves as cofactor. Requires K(+) as cofactor.

The protein localises to the cytoplasm. It carries out the reaction (R)-pantothenate + ATP = (R)-4'-phosphopantothenate + ADP + H(+). It participates in cofactor biosynthesis; coenzyme A biosynthesis; CoA from (R)-pantothenate: step 1/5. Its function is as follows. Catalyzes the phosphorylation of pantothenate (Pan), the first step in CoA biosynthesis. The protein is Type III pantothenate kinase of Clostridium beijerinckii (strain ATCC 51743 / NCIMB 8052) (Clostridium acetobutylicum).